Reading from the N-terminus, the 84-residue chain is Small ribosomal subunit protein bS16 (84 aa).

This sequence belongs to the bacterial ribosomal protein bS16 family.

The polypeptide is Small ribosomal subunit protein bS16 (Thioalkalivibrio sulfidiphilus (strain HL-EbGR7)).